The primary structure comprises 450 residues: Protein phosphatase 1F (450 aa).

Residues 152-409 form the PPM-type phosphatase domain; the sequence is LVSIHAIRNT…DNITVMVVFL (258 aa). Residues Asp-194, Gly-195, Asp-356, and Asp-400 each coordinate Mn(2+). A disordered region spans residues 420–450; it reads GQGAGGAQADVGSQDLSTGLSELEINTSQRS. Residues 433-450 show a composition bias toward polar residues; that stretch reads QDLSTGLSELEINTSQRS. Ser-450 is subject to Phosphoserine.

This sequence belongs to the PP2C family. Associates with FEM1B. It depends on Mg(2+) as a cofactor. Mn(2+) serves as cofactor.

It carries out the reaction O-phospho-L-seryl-[protein] + H2O = L-seryl-[protein] + phosphate. The catalysed reaction is O-phospho-L-threonyl-[protein] + H2O = L-threonyl-[protein] + phosphate. In terms of biological role, dephosphorylates and concomitantly deactivates CaM-kinase II activated upon autophosphorylation, and CaM-kinases IV and I activated upon phosphorylation by CaM-kinase kinase. Promotes apoptosis. The polypeptide is Protein phosphatase 1F (Ppm1f) (Rattus norvegicus (Rat)).